Reading from the N-terminus, the 505-residue chain is Lysine--tRNA ligase (505 aa).

Glu415 and Glu422 together coordinate Mg(2+).

Belongs to the class-II aminoacyl-tRNA synthetase family. Homodimer. Requires Mg(2+) as cofactor.

The protein localises to the cytoplasm. It carries out the reaction tRNA(Lys) + L-lysine + ATP = L-lysyl-tRNA(Lys) + AMP + diphosphate. The sequence is that of Lysine--tRNA ligase (lysS) from Escherichia coli (strain K12).